Here is a 692-residue protein sequence, read N- to C-terminus: Elongation factor G (692 aa).

The 275-residue stretch at 8-282 (AKTRNIGIMA…AVIAYLPSPL (275 aa)) folds into the tr-type G domain. Residues 17-24 (AHVDAGKT), 81-85 (DTPGH), and 135-138 (NKMD) contribute to the GTP site.

It belongs to the TRAFAC class translation factor GTPase superfamily. Classic translation factor GTPase family. EF-G/EF-2 subfamily.

Its subcellular location is the cytoplasm. In terms of biological role, catalyzes the GTP-dependent ribosomal translocation step during translation elongation. During this step, the ribosome changes from the pre-translocational (PRE) to the post-translocational (POST) state as the newly formed A-site-bound peptidyl-tRNA and P-site-bound deacylated tRNA move to the P and E sites, respectively. Catalyzes the coordinated movement of the two tRNA molecules, the mRNA and conformational changes in the ribosome. This Streptococcus pyogenes serotype M49 (strain NZ131) protein is Elongation factor G.